The following is a 246-amino-acid chain: Ribonuclease 3 (246 aa).

The region spanning 16–146 (ATELEAGIGY…LLAAVYLDGG (131 aa)) is the RNase III domain. Residue glutamate 59 coordinates Mg(2+). Aspartate 63 is an active-site residue. 2 residues coordinate Mg(2+): asparagine 132 and glutamate 135. Residue glutamate 135 is part of the active site. Residues 173–242 (DFKTEFQEMV…ARQVLARFAA (70 aa)) form the DRBM domain.

The protein belongs to the ribonuclease III family. Homodimer. Mg(2+) serves as cofactor.

The protein localises to the cytoplasm. The catalysed reaction is Endonucleolytic cleavage to 5'-phosphomonoester.. Functionally, digests double-stranded RNA. Involved in the processing of primary rRNA transcript to yield the immediate precursors to the large and small rRNAs (23S and 16S). Processes some mRNAs, and tRNAs when they are encoded in the rRNA operon. Processes pre-crRNA and tracrRNA of type II CRISPR loci if present in the organism. This Geobacter metallireducens (strain ATCC 53774 / DSM 7210 / GS-15) protein is Ribonuclease 3.